The sequence spans 142 residues: Peptidyl-prolyl cis-trans isomerase FKBP2 (142 aa).

Residues 1–21 form the signal peptide; it reads MRLSWFRVLTVLSICLSAVAT. Positions 49 to 137 constitute a PPIase FKBP-type domain; that stretch reads GDVLHMHYTG…VFEVELLKIE (89 aa). Residues 139–142 carry the Prevents secretion from ER motif; the sequence is RTEL.

The protein belongs to the FKBP-type PPIase family. FKBP2 subfamily. In terms of assembly, interacts with ARFGEF1/BIG1 and the C-terminal of EPB41L2. As to expression, T-cells and thymus.

The protein resides in the endoplasmic reticulum membrane. It carries out the reaction [protein]-peptidylproline (omega=180) = [protein]-peptidylproline (omega=0). Inhibited by both FK506 and rapamycin. Its function is as follows. PPIases accelerate the folding of proteins. It catalyzes the cis-trans isomerization of proline imidic peptide bonds in oligopeptides. The polypeptide is Peptidyl-prolyl cis-trans isomerase FKBP2 (FKBP2) (Homo sapiens (Human)).